The chain runs to 198 residues: UPF0301 protein BDI_1431 (198 aa).

It belongs to the UPF0301 (AlgH) family.

The chain is UPF0301 protein BDI_1431 from Parabacteroides distasonis (strain ATCC 8503 / DSM 20701 / CIP 104284 / JCM 5825 / NCTC 11152).